The primary structure comprises 468 residues: Zinc finger protein mex-5 (468 aa).

A compositionally biased stretch (low complexity) spans 1–19 (MKAASNSVSSAGGSVSPTT). The disordered stretch occupies residues 1–32 (MKAASNSVSSAGGSVSPTTTQPPLPPGQSSHP). Position 186 is a phosphothreonine; by mbk-2 (Thr-186). Positions 243 to 254 (NHFHEHRGEKFG) are enriched in basic and acidic residues. Residues 243-269 (NHFHEHRGEKFGRRGFPIPETDSQQPP) form a disordered region. 2 consecutive C3H1-type zinc fingers follow at residues 270 to 299 (NYKT…HGLK) and 314 to 344 (KYKT…HPTD). The tract at residues 414–468 (DLQAGGDYNQPESNEDDLPPHLRRNRRENPPMNKRRTSLSTKWTSEENLGLRGHY) is disordered. The segment covering 451–460 (SLSTKWTSEE) has biased composition (polar residues). A Phosphoserine modification is found at Ser-458.

As to quaternary structure, interacts (when phosphorylated on Thr-186) with plk-1 (via POLO box domain) and plk-2 (via POLO box domain). In terms of processing, phosphorylation on Ser-458 by par-1 promotes localization of the protein to the anterior cytoplasm of the zygote. Phosphorylation by mbk-1 appears to be required for subsequent phosphorylation by plk-1. As to expression, asymmetrically localized to the anterior of the zygote before mitotic division, then differentially distributed to the somatic blastomere precursor cells.

The protein localises to the cytoplasm. Functionally, functions with mex-6 to affect embryonic viability, establish soma germline asymmetry in embryos and establish plk-1, pie-1, mex-1, and pos-1 asymmetry in embryos. Also affects formation of intestinal cells. Binds to mRNA in vitro, and inhibits pgl-3-mediated P-granule formation, probably by competing with pgl-3 for binding to mRNA. Required for neg-1 expression in anterior blastomeres during embryogenesis. The protein is Zinc finger protein mex-5 of Caenorhabditis elegans.